A 158-amino-acid polypeptide reads, in one-letter code: NADH-quinone oxidoreductase subunit B (158 aa).

The [4Fe-4S] cluster site is built by cysteine 37, cysteine 38, cysteine 102, and cysteine 132.

Belongs to the complex I 20 kDa subunit family. NDH-1 is composed of 14 different subunits. Subunits NuoB, C, D, E, F, and G constitute the peripheral sector of the complex. The cofactor is [4Fe-4S] cluster.

Its subcellular location is the cell inner membrane. The catalysed reaction is a quinone + NADH + 5 H(+)(in) = a quinol + NAD(+) + 4 H(+)(out). Its function is as follows. NDH-1 shuttles electrons from NADH, via FMN and iron-sulfur (Fe-S) centers, to quinones in the respiratory chain. Couples the redox reaction to proton translocation (for every two electrons transferred, four hydrogen ions are translocated across the cytoplasmic membrane), and thus conserves the redox energy in a proton gradient. In Methylobacillus flagellatus (strain ATCC 51484 / DSM 6875 / VKM B-1610 / KT), this protein is NADH-quinone oxidoreductase subunit B.